The chain runs to 990 residues: MISSSMSYRHSTNSVYTLNPHLNIPISTSTTIPPTSFYANNTPEMIQSQSENTNTNNINNSSSNINNNNNNTPDSMSMSTSLSSSPSVSFNHLDLNSINNKINNNTTTNNNNNNNNNNDDKFDTNALKLSNTMIIKNNNNNNNNNNNNNNNNNNNNNNNNNNNNNNNNNNNNNNNNNNNNNNNNNNNSNSNIEINVPSIQFDNEPAMEVDSVAPLNVPSNHTRTTLAMHNTKSLSTSNIGLLNILPNQQSSSSSSLSSTTTTTTTTSSSLLMPQSLFNNSTYNNHHNNNNSSNAGIVGGLNGSTSSLPTQAQVQLQQMQQQMQQHQQHQYKKANLSSLSTVVDNNLNNNPMNTSTSSPAQPNASPFSFSSSSLFSNSSLSNSGSGSASTTSTSTSSSNSMSSSPPPSLKTSFSQLDEDREKMRLEFEMIKKPEMASKKSHKHHQRHYSHNDLDNRKHDEEKFFSALQPNNYGKNRYHDVLPNESTRVRLTPIESGDGDYINANYINGEVPNSYRYYIACQAPLPSTIKDFWRMVWEERSSVIVCLTKLEENGKKKADVYYPETSQAQEYGSFWIHLHKKVMFKDIGVSSLHLYKKGEEFPREVVLLHYTQWPDCGAPPSSSHIRTLSVMVNTFKARGSAKNTNGPVIVHCSAGIGRSGTFISININMAKIERFGNDPSQMNISIKDSVLELRRQRRGMVQTLDQYIFIFKVINDVLTDMGIRSLSSPSKRRSCEMIKSTPMPRLDISIPPPLTFTPKDFQSSISPSTDMIASLSIITQMTQTLKFPPQQQQDNPFSKSSIKISPSPLNSTNISIPKNQQFQHPFQIQPQLDLNLQQQQQQSSQQLNDNPPLNMSSNSIKFPPVTSLSSCHLFEDSKNNDNNNKQQQQQQQQQQKNNQQCSGFSHFLNNNNNNDNNGSSGGGFNGSFLFNSNNSGSSSTNSECSNNNKNNNNNSNNNNNNNNNKNSDNNGTKDKDENDSCESPRVTPIKCF.

Disordered regions lie at residues 47–88 (QSQS…SPSV), 100–193 (NKIN…SNIE), 246–414 (PNQQ…SFSQ), and 431–452 (KPEMASKKSHKHHQRHYSHNDL). 2 stretches are compositionally biased toward low complexity: residues 52 to 88 (NTNTNNINNSSSNINNNNNNTPDSMSMSTSLSSSPSV) and 100 to 117 (NKINNNTTTNNNNNNNNN). Over residues 127 to 136 (LKLSNTMIIK) the composition is skewed to polar residues. Low complexity-rich tracts occupy residues 137–191 (NNNN…SNSN), 250–271 (SSSSSSLSSTTTTTTTTSSSLL), 278–293 (NNSTYNNHHNNNNSSN), 310–327 (QAQVQLQQMQQQMQQHQQ), and 334–413 (NLSS…TSFS). The region spanning 422–715 (MRLEFEMIKK…IFIFKVINDV (294 aa)) is the Tyrosine-protein phosphatase domain. The span at 437–447 (KKSHKHHQRHY) shows a compositional bias: basic residues. C650 functions as the Phosphocysteine intermediate in the catalytic mechanism. Residues 786-795 (PPQQQQDNPF) show a composition bias toward polar residues. Disordered stretches follow at residues 786–814 (PPQQQQDNPFSKSSIKISPSPLNSTNISI) and 834–990 (LQQQ…IKCF). 2 stretches are compositionally biased toward low complexity: residues 796-806 (SKSSIKISPSP) and 834-850 (LQQQQQQSSQQLNDNPP). Residues 851 to 868 (LNMSSNSIKFPPVTSLSS) are compositionally biased toward polar residues. Composition is skewed to low complexity over residues 878–916 (NDNNNKQQQQQQQQQQKNNQQCSGFSHFLNNNNNNDNNG) and 924–968 (GSFL…SDNN).

This sequence belongs to the protein-tyrosine phosphatase family. Non-receptor class subfamily. As to expression, in the anterior-like and prestalk cell types.

The protein localises to the cytoplasm. It carries out the reaction O-phospho-L-tyrosyl-[protein] + H2O = L-tyrosyl-[protein] + phosphate. Seems to dephosphorylate a protein of 130 kDa (p130). This Dictyostelium discoideum (Social amoeba) protein is Tyrosine-protein phosphatase 3 (ptpC).